Here is a 459-residue protein sequence, read N- to C-terminus: Cysteine--tRNA ligase (459 aa).

A Zn(2+)-binding site is contributed by C28. A 'HIGH' region motif is present at residues V30–H40. The Zn(2+) site is built by C209, H234, and E238. A 'KMSKS' region motif is present at residues K266–S270. Position 269 (K269) interacts with ATP.

Belongs to the class-I aminoacyl-tRNA synthetase family. Monomer. The cofactor is Zn(2+).

Its subcellular location is the cytoplasm. The catalysed reaction is tRNA(Cys) + L-cysteine + ATP = L-cysteinyl-tRNA(Cys) + AMP + diphosphate. The sequence is that of Cysteine--tRNA ligase from Haemophilus influenzae (strain 86-028NP).